The sequence spans 247 residues: Type III pantothenate kinase (247 aa).

7-14 (AIGNSRWH) provides a ligand contact to ATP. Substrate-binding positions include Tyr-91 and 95–98 (GLDR). Asp-97 acts as the Proton acceptor in catalysis. Asp-117 serves as a coordination point for K(+). Thr-120 contributes to the ATP binding site. Thr-172 contributes to the substrate binding site.

This sequence belongs to the type III pantothenate kinase family. Homodimer. NH4(+) serves as cofactor. The cofactor is K(+).

The protein resides in the cytoplasm. The catalysed reaction is (R)-pantothenate + ATP = (R)-4'-phosphopantothenate + ADP + H(+). Its pathway is cofactor biosynthesis; coenzyme A biosynthesis; CoA from (R)-pantothenate: step 1/5. Its function is as follows. Catalyzes the phosphorylation of pantothenate (Pan), the first step in CoA biosynthesis. The chain is Type III pantothenate kinase from Synechococcus elongatus (strain ATCC 33912 / PCC 7942 / FACHB-805) (Anacystis nidulans R2).